The following is a 281-amino-acid chain: Pantothenate synthetase (281 aa).

30 to 37 (MGNLHQGH) lines the ATP pocket. Residue His37 is the Proton donor of the active site. Gln61 lines the (R)-pantoate pocket. Gln61 provides a ligand contact to beta-alanine. 149 to 152 (GNKD) is a binding site for ATP. Gln155 is a (R)-pantoate binding site. Residues Ile178 and 186 to 189 (MSSR) each bind ATP.

The protein belongs to the pantothenate synthetase family. Homodimer.

The protein localises to the cytoplasm. It catalyses the reaction (R)-pantoate + beta-alanine + ATP = (R)-pantothenate + AMP + diphosphate + H(+). It functions in the pathway cofactor biosynthesis; (R)-pantothenate biosynthesis; (R)-pantothenate from (R)-pantoate and beta-alanine: step 1/1. Catalyzes the condensation of pantoate with beta-alanine in an ATP-dependent reaction via a pantoyl-adenylate intermediate. The sequence is that of Pantothenate synthetase from Shewanella baltica (strain OS155 / ATCC BAA-1091).